A 206-amino-acid polypeptide reads, in one-letter code: uncharacterized protein (206 aa).

A run of 4 helical transmembrane segments spans residues 9 to 29 (ILSL…SVLT), 47 to 67 (LGVV…LAFL), 74 to 94 (FFVI…INTI), and 150 to 170 (IAVI…FYAF).

This sequence belongs to the Rht family.

It localises to the cell membrane. This is an uncharacterized protein from Synechocystis sp. (strain ATCC 27184 / PCC 6803 / Kazusa).